A 461-amino-acid polypeptide reads, in one-letter code: Glyceraldehyde-3-phosphate dehydrogenase-like protein (461 aa).

Thr-421 is modified (phosphothreonine).

The protein belongs to the glyceraldehyde-3-phosphate dehydrogenase family.

The chain is Glyceraldehyde-3-phosphate dehydrogenase-like protein (gap2) from Pseudomonas aeruginosa (strain UCBPP-PA14).